Reading from the N-terminus, the 215-residue chain is UPF0323 lipoprotein jhp_0217 (215 aa).

Residues 1–27 form the signal peptide; the sequence is MKKPYRKISDYAIVGGLSALVMVSIVG. Cys-28 carries the N-palmitoyl cysteine lipid modification. Residue Cys-28 is the site of S-diacylglycerol cysteine attachment. Residues 158 to 169 show a composition bias toward polar residues; the sequence is QRTYKSPQAYQR. The interval 158 to 215 is disordered; that stretch reads QRTYKSPQAYQRSQNSFSKSAPSASSMGTASKGQSGFFGSSRPTSSPAISSGTRGFNA. Positions 170–183 are enriched in low complexity; the sequence is SQNSFSKSAPSASS. The span at 184 to 195 shows a compositional bias: polar residues; it reads MGTASKGQSGFF. Positions 197 to 208 are enriched in low complexity; that stretch reads SSRPTSSPAISS.

It belongs to the UPF0323 family.

Its subcellular location is the cell membrane. The polypeptide is UPF0323 lipoprotein jhp_0217 (Helicobacter pylori (strain J99 / ATCC 700824) (Campylobacter pylori J99)).